A 158-amino-acid polypeptide reads, in one-letter code: Small ribosomal subunit protein uS7 (158 aa).

This sequence belongs to the universal ribosomal protein uS7 family. Part of the 30S ribosomal subunit. Contacts proteins S9 and S11.

In terms of biological role, one of the primary rRNA binding proteins, it binds directly to 16S rRNA where it nucleates assembly of the head domain of the 30S subunit. Is located at the subunit interface close to the decoding center, probably blocks exit of the E-site tRNA. The sequence is that of Small ribosomal subunit protein uS7 from Flavobacterium johnsoniae (strain ATCC 17061 / DSM 2064 / JCM 8514 / BCRC 14874 / CCUG 350202 / NBRC 14942 / NCIMB 11054 / UW101) (Cytophaga johnsonae).